The following is a 473-amino-acid chain: Sarcalumenin (473 aa).

Positions 1-20 (MRALVLLGCLLASLLFSGQA) are cleaved as a signal peptide. Residues 90–331 (ITSKPMVLFL…IENRLENKIA (242 aa)) form the Dynamin-type G domain. Residues 100-107 (GPWSVGKS) form a G1 motif region. The G2 motif stretch occupies residues 128–129 (EP). Positions 190–193 (DTPG) are G3 motif. The tract at residues 255–258 (NKAD) is G4 motif. Pro-278 is a region of interest (G5 motif). Residues Asn-281 and Asn-389 are each glycosylated (N-linked (GlcNAc...) asparagine).

Belongs to the TRAFAC class dynamin-like GTPase superfamily. Dynamin/Fzo/YdjA family. In terms of processing, N-glycosylated.

It localises to the sarcoplasmic reticulum lumen. The protein resides in the sarcoplasmic reticulum membrane. In Homo sapiens (Human), this protein is Sarcalumenin (SRL).